Consider the following 162-residue polypeptide: Ribosome maturation factor RimM (162 aa).

The PRC barrel domain occupies 90 to 161 (EDCYYEADIV…KIIIKPLEVW (72 aa)).

The protein belongs to the RimM family. Binds ribosomal protein uS19.

Its subcellular location is the cytoplasm. An accessory protein needed during the final step in the assembly of 30S ribosomal subunit, possibly for assembly of the head region. Essential for efficient processing of 16S rRNA. May be needed both before and after RbfA during the maturation of 16S rRNA. It has affinity for free ribosomal 30S subunits but not for 70S ribosomes. This Clostridium novyi (strain NT) protein is Ribosome maturation factor RimM.